The primary structure comprises 283 residues: Pantothenate synthetase (283 aa).

ATP is bound at residue 30–37 (MGYYHAGH). Residue H37 is the Proton donor of the active site. Q61 serves as a coordination point for (R)-pantoate. Q61 provides a ligand contact to beta-alanine. 147-150 (GQKD) lines the ATP pocket. Q153 serves as a coordination point for (R)-pantoate. ATP is bound by residues V176 and 184–187 (MSSR).

Belongs to the pantothenate synthetase family. Homodimer.

It is found in the cytoplasm. The catalysed reaction is (R)-pantoate + beta-alanine + ATP = (R)-pantothenate + AMP + diphosphate + H(+). It functions in the pathway cofactor biosynthesis; (R)-pantothenate biosynthesis; (R)-pantothenate from (R)-pantoate and beta-alanine: step 1/1. In terms of biological role, catalyzes the condensation of pantoate with beta-alanine in an ATP-dependent reaction via a pantoyl-adenylate intermediate. This chain is Pantothenate synthetase, found in Nitratidesulfovibrio vulgaris (strain ATCC 29579 / DSM 644 / CCUG 34227 / NCIMB 8303 / VKM B-1760 / Hildenborough) (Desulfovibrio vulgaris).